A 520-amino-acid polypeptide reads, in one-letter code: 6-phosphofructo-2-kinase/fructose-2,6-bisphosphatase 3 (520 aa).

The 6-phosphofructo-2-kinase stretch occupies residues 1-245 (MPLELTQSRV…VYYLMNIHVQ (245 aa)). An ATP-binding site is contributed by 42-50 (GLPARGKTY). Positions 75 and 99 each coordinate beta-D-fructose 6-phosphate. D125 is an active-site residue. Beta-D-fructose 6-phosphate is bound by residues T127 and R133. Residue C155 is part of the active site. ATP is bound at residue 164-169 (NIMEVK). 3 residues coordinate beta-D-fructose 6-phosphate: K169, R190, and Y194. Positions 246-520 (PRTIYLCRHG…RSSADSSRKH (275 aa)) are fructose-2,6-bisphosphatase. R253 contacts beta-D-fructose 2,6-bisphosphate. H254 functions as the Tele-phosphohistidine intermediate in the catalytic mechanism. Residues N260 and G266 each contribute to the beta-D-fructose 2,6-bisphosphate site. E323 serves as the catalytic Proton donor/acceptor. The beta-D-fructose 2,6-bisphosphate site is built by Y334, R348, K352, Y363, Q389, and R393. 345 to 348 (YALR) is a binding site for ATP. ATP contacts are provided by residues 389–393 (QAVLR) and Y425. Positions 443–520 (RERSEDAKKG…RSSADSSRKH (78 aa)) are disordered. A Phosphoserine; by AMPK modification is found at S461. Phosphothreonine is present on T463. S467 bears the Phosphoserine mark. T471 bears the Phosphothreonine; by PKC mark. Over residues 502–520 (LPGQNMKGSRSSADSSRKH) the composition is skewed to polar residues.

In the C-terminal section; belongs to the phosphoglycerate mutase family. In terms of assembly, homodimer. Forms a heterodimer with PFKFB2. Phosphorylation by AMPK stimulates activity. As to expression, ubiquitous.

It carries out the reaction beta-D-fructose 2,6-bisphosphate + H2O = beta-D-fructose 6-phosphate + phosphate. The enzyme catalyses beta-D-fructose 6-phosphate + ATP = beta-D-fructose 2,6-bisphosphate + ADP + H(+). In terms of biological role, catalyzes both the synthesis and degradation of fructose 2,6-bisphosphate. This chain is 6-phosphofructo-2-kinase/fructose-2,6-bisphosphatase 3 (PFKFB3), found in Homo sapiens (Human).